A 430-amino-acid polypeptide reads, in one-letter code: von Willebrand factor (430 aa).

N-linked (GlcNAc...) asparagine glycosylation is present at Asn-6. Cys-9 and Cys-12 are oxidised to a cystine. O-linked (GalNAc...) threonine glycans are attached at residues Thr-23, Thr-30, and Thr-31. Cys-47 and Cys-233 are disulfide-bonded. The VWFA 1; binding site for platelet glycoprotein Ib domain maps to 52–228 (DLVFLLDGSY…DELEQRRDEI (177 aa)). O-linked (GalNAc...) threonine glycosylation is present at Thr-252. A glycan (O-linked (GalNAc...) serine) is linked at Ser-261. One can recognise a VWFA 2 domain in the interval 273 to 430 (DVVFVLEASD…ITPIFIQDFE (158 aa)). N-linked (GlcNAc...) asparagine glycans are attached at residues Asn-290 and Asn-349.

Multimeric. Interacts with F8. In terms of processing, N- and O-glycosylated. As to expression, plasma.

Its subcellular location is the secreted. The protein localises to the extracellular space. It is found in the extracellular matrix. Functionally, important in the maintenance of hemostasis, it promotes adhesion of platelets to the sites of vascular injury by forming a molecular bridge between sub-endothelial collagen matrix and platelet-surface receptor complex GPIb-IX-V. Also acts as a chaperone for coagulation factor VIII, delivering it to the site of injury, stabilizing its heterodimeric structure and protecting it from premature clearance from plasma. This chain is von Willebrand factor, found in Rattus norvegicus (Rat).